The chain runs to 358 residues: Magnesium-protoporphyrin IX monomethyl ester [oxidative] cyclase (358 aa).

It belongs to the AcsF family. Fe cation is required as a cofactor.

It catalyses the reaction Mg-protoporphyrin IX 13-monomethyl ester + 3 NADPH + 3 O2 + 2 H(+) = 3,8-divinyl protochlorophyllide a + 3 NADP(+) + 5 H2O. It functions in the pathway porphyrin-containing compound metabolism; chlorophyll biosynthesis (light-independent). In terms of biological role, catalyzes the formation of the isocyclic ring in chlorophyll biosynthesis. Mediates the cyclase reaction, which results in the formation of divinylprotochlorophyllide (Pchlide) characteristic of all chlorophylls from magnesium-protoporphyrin IX 13-monomethyl ester (MgPMME). This chain is Magnesium-protoporphyrin IX monomethyl ester [oxidative] cyclase, found in Trichodesmium erythraeum (strain IMS101).